Consider the following 456-residue polypeptide: Phospholipase A1 member A (456 aa).

The signal sequence occupies residues 1 to 25; the sequence is MPPGPWESCFWVGGLILWLSVGSSG. N-linked (GlcNAc...) asparagine glycosylation is present at Asn-79. Ser-166 functions as the Nucleophile in the catalytic mechanism. Catalysis depends on Asp-190, which acts as the Charge relay system. Cys-245 and Cys-258 are joined by a disulfide. The active-site Charge relay system is the His-260. 2 disulfide bridges follow: Cys-282-Cys-293 and Cys-296-Cys-304. N-linked (GlcNAc...) asparagine glycosylation is present at Asn-365. The interval 374–456 is involved in the recognition of diacyl-phospholipids; sequence IPKQQRYGKG…VSCDLKIACV (83 aa).

The protein belongs to the AB hydrolase superfamily. Lipase family. As to expression, widely expressed. Expressed in placenta, prostate and liver. Weakly or not expressed in skin, leukocytes, platelets, colon, spleen, lung, muscle and kidney.

It localises to the secreted. It carries out the reaction a 1,2-diacyl-sn-glycero-3-phospho-L-serine + H2O = a 2-acyl-sn-glycero-3-phospho-L-serine + a fatty acid + H(+). The catalysed reaction is 1,2-di-(9Z)-octadecenoyl-sn-glycero-3-phospho-L-serine + H2O = 2-(9Z-octadecenoyl)-sn-glycero-3-phospho-L-serine + (9Z)-octadecenoate + H(+). It catalyses the reaction 1-hexadecanoyl-2-(5Z,8Z,11Z,14Z-eicosatetraenoyl)-sn-glycero-3-phospho-L-serine + H2O = 2-(5Z,8Z,11Z,14Z)-eicosatetraenoyl-sn-glycero-3-phospho-L-serine + hexadecanoate + H(+). The enzyme catalyses a 1-acyl-sn-glycero-3-phospho-L-serine + H2O = sn-glycero-3-phospho-L-serine + a fatty acid + H(+). It carries out the reaction 1-(9Z-octadecenoyl)-sn-glycero-3-phospho-L-serine + H2O = sn-glycero-3-phospho-L-serine + (9Z)-octadecenoate + H(+). Functionally, hydrolyzes the ester bond of the acyl group attached at the sn-1 position of phosphatidylserines (phospholipase A1 activity) and 1-acyl-2-lysophosphatidylserines (lysophospholipase activity) in the pathway of phosphatidylserines acyl chain remodeling. Cleaves phosphatidylserines exposed on the outer leaflet of the plasma membrane of apoptotic cells producing 2-acyl-1-lysophosphatidylserines, which in turn enhance mast cell activation and histamine production. Has no activity toward other glycerophospholipids including phosphatidylcholines, phosphatidylethanolamines, phosphatidic acids or phosphatidylinositols, or glycerolipids such as triolein. Its function is as follows. Hydrolyzes lyso-PS but not PS. The polypeptide is Phospholipase A1 member A (Homo sapiens (Human)).